Reading from the N-terminus, the 241-residue chain is Uridylate kinase (241 aa).

9–10 lines the ATP pocket; the sequence is GS. UMP is bound at residue glycine 44. ATP is bound by residues glycine 45 and arginine 49. UMP-binding positions include aspartate 66 and 114 to 120; that span reads VTPGQTT. The ATP site is built by threonine 140, tyrosine 146, and aspartate 149. Positions 222–241 are disordered; sequence TDVIPTGSEEPIYWTGSSDA.

Belongs to the UMP kinase family. In terms of assembly, homohexamer.

Its subcellular location is the cytoplasm. It catalyses the reaction UMP + ATP = UDP + ADP. It functions in the pathway pyrimidine metabolism; CTP biosynthesis via de novo pathway; UDP from UMP (UMPK route): step 1/1. Its activity is regulated as follows. Inhibited by UTP. Catalyzes the reversible phosphorylation of UMP to UDP. The protein is Uridylate kinase of Halorubrum lacusprofundi (strain ATCC 49239 / DSM 5036 / JCM 8891 / ACAM 34).